We begin with the raw amino-acid sequence, 156 residues long: MPRRREVPKREVLPDPKYGNVDVAKFMNMLMLSGKKSVAERIVYGAFEQIQTKGGKDPLEVFTVALNNVKPVVEVKSRRVGGANYQVPVEVRPSRRMALAMRWLREAAKKRSEKSMALRLAGELSEAAEGRGGAMKKRDEVHRMAEANRAFSHFRF.

The protein belongs to the universal ribosomal protein uS7 family. As to quaternary structure, part of the 30S ribosomal subunit. Contacts proteins S9 and S11.

One of the primary rRNA binding proteins, it binds directly to 16S rRNA where it nucleates assembly of the head domain of the 30S subunit. Is located at the subunit interface close to the decoding center, probably blocks exit of the E-site tRNA. The chain is Small ribosomal subunit protein uS7 from Burkholderia multivorans (strain ATCC 17616 / 249).